We begin with the raw amino-acid sequence, 289 residues long: Zinc finger matrin-type protein 3 (289 aa).

Positions 1–59 are disordered; it reads MILLQHAGLPPPKRPSSSPPMSVAARSTGALQLPPQKPFGQEASLPLAGEEEPPKGGEQ. The segment covering 9–18 has biased composition (pro residues); that stretch reads LPPPKRPSSS. Matrin-type zinc fingers lie at residues 70 to 100 and 147 to 177; these read LYCK…KLRN and DYCK…RLRL. The segment covering 180 to 191 has biased composition (polar residues); sequence AQSNSFSDSSEV. The interval 180-200 is disordered; sequence AQSNSFSDSSEVGQRRTRKEG. Residues 246–276 form a Matrin-type 3 zinc finger; that stretch reads FYCSMCNVGAGEEVEFRQHLESKQHKSKVSE.

As to quaternary structure, interacts with dsRNA.

The protein resides in the nucleus. The protein localises to the nucleolus. In terms of biological role, acts as a bona fide target gene of p53/TP53. May play a role in the TP53-dependent growth regulatory pathway. May contribute to TP53-mediated apoptosis by regulation of TP53 expression and translocation to the nucleus and nucleolus. This Bos taurus (Bovine) protein is Zinc finger matrin-type protein 3.